Consider the following 130-residue polypeptide: Insulin-like growth factor 1 (130 aa).

The N-terminal stretch at 1 to 25 (MHAVSSSHLFYLAFCLLVLTSSATA) is a signal peptide. Positions 26–54 (GPETLCGAELVDALQFVCGDRGFYFNKPT) are b. 3 disulfide bridges follow: Cys-31/Cys-73, Cys-43/Cys-86, and Cys-72/Cys-77. Residues 55–66 (GYGSSSRRAPQT) form a c region. Residues 67-87 (GIVDECCFRSCDLRRLEMYCA) form an a region. Residues 88-95 (PLKPAKSA) are d. The propeptide at 96–130 (RSVRAQRHTDMPKTQKEVHLKNASRGSAGNKNYRM) is e peptide. Residues 97 to 130 (SVRAQRHTDMPKTQKEVHLKNASRGSAGNKNYRM) are disordered. The segment covering 102-115 (RHTDMPKTQKEVHL) has biased composition (basic and acidic residues). Polar residues predominate over residues 119–130 (SRGSAGNKNYRM).

Belongs to the insulin family. As to quaternary structure, forms a ternary complex with IGFR1 and ITGAV:ITGB3. Forms a ternary complex with IGFR1 and ITGA6:ITGB4. Forms a ternary complex with IGFBP3 and ALS.

It localises to the secreted. Functionally, the insulin-like growth factors, isolated from plasma, are structurally and functionally related to insulin but have a much higher growth-promoting activity. May be a physiological regulator of [1-14C]-2-deoxy-D-glucose (2DG) transport and glycogen synthesis in osteoblasts. Stimulates glucose transport in bone-derived osteoblastic (PyMS) cells and is effective at much lower concentrations than insulin, not only regarding glycogen and DNA synthesis but also with regard to enhancing glucose uptake. May play a role in synapse maturation. Ca(2+)-dependent exocytosis of IGF1 is required for sensory perception of smell in the olfactory bulb. Acts as a ligand for IGF1R. Binds to the alpha subunit of IGF1R, leading to the activation of the intrinsic tyrosine kinase activity which autophosphorylates tyrosine residues in the beta subunit thus initiating a cascade of down-stream signaling events leading to activation of the PI3K-AKT/PKB and the Ras-MAPK pathways. Binds to integrins ITGAV:ITGB3 and ITGA6:ITGB4. Its binding to integrins and subsequent ternary complex formation with integrins and IGFR1 are essential for IGF1 signaling. Induces the phosphorylation and activation of IGFR1, MAPK3/ERK1, MAPK1/ERK2 and AKT1. As part of the MAPK/ERK signaling pathway, acts as a negative regulator of apoptosis in cardiomyocytes via promotion of STUB1/CHIP-mediated ubiquitination and degradation of ICER-type isoforms of CREM. The polypeptide is Insulin-like growth factor 1 (Cavia porcellus (Guinea pig)).